The primary structure comprises 154 residues: MPTDLPYAAEAESSLSPDELEVLRRQYYREIEQGHVTIQSKFNYGWGLIKSPSPELETEGVKLLQEIYSASPDHRRECTYYIAVGYYKLRNYAYARKFNNLLLSVEPGNMQAQSLSTLIENAVKRDGLVGIGMITGAVAVVGLIAGSVWKRSRR.

Residues 1–127 are Cytoplasmic-facing; sequence MPTDLPYAAE…LIENAVKRDG (127 aa). Residues 76 to 109 form a TPR repeat; it reads RECTYYIAVGYYKLRNYAYARKFNNLLLSVEPGN. Residues 128-148 form a helical membrane-spanning segment; the sequence is LVGIGMITGAVAVVGLIAGSV. Topologically, residues 149-154 are mitochondrial intermembrane; the sequence is WKRSRR.

It belongs to the FIS1 family.

The protein localises to the mitochondrion outer membrane. Has a role in mitochondrial fission. Has a role in outer membrane fission but not matrix separation. The polypeptide is Mitochondrial fission 1 protein (FIS1) (Cryptococcus neoformans var. neoformans serotype D (strain B-3501A) (Filobasidiella neoformans)).